We begin with the raw amino-acid sequence, 131 residues long: Large ribosomal subunit protein bL12c (131 aa).

Belongs to the bacterial ribosomal protein bL12 family. Homodimer. Part of the ribosomal stalk of the 50S ribosomal subunit. Forms a multimeric L10(L12)X complex, where L10 forms an elongated spine to which 2 to 4 L12 dimers bind in a sequential fashion. Binds GTP-bound translation factors.

The protein localises to the plastid. Its subcellular location is the chloroplast. In terms of biological role, forms part of the ribosomal stalk which helps the ribosome interact with GTP-bound translation factors. Is thus essential for accurate translation. The sequence is that of Large ribosomal subunit protein bL12c from Euglena gracilis.